A 492-amino-acid chain; its full sequence is Ketol-acid reductoisomerase (NADP(+)) (492 aa).

In terms of domain architecture, KARI N-terminal Rossmann spans 15–208 (AQLGKCRFMA…GGHRAGVLES (194 aa)). NADP(+) contacts are provided by residues 45–48 (CGAQ), arginine 68, arginine 76, serine 78, and 108–110 (DKQ). Residue histidine 132 is part of the active site. Glycine 158 is an NADP(+) binding site. KARI C-terminal knotted domains are found at residues 209 to 344 (SFVA…NAPQ) and 345 to 485 (FEGK…MTDM). Residues aspartate 217, glutamate 221, glutamate 389, and glutamate 393 each coordinate Mg(2+). Serine 414 is a binding site for substrate.

It belongs to the ketol-acid reductoisomerase family. Requires Mg(2+) as cofactor.

The catalysed reaction is (2R)-2,3-dihydroxy-3-methylbutanoate + NADP(+) = (2S)-2-acetolactate + NADPH + H(+). It catalyses the reaction (2R,3R)-2,3-dihydroxy-3-methylpentanoate + NADP(+) = (S)-2-ethyl-2-hydroxy-3-oxobutanoate + NADPH + H(+). It participates in amino-acid biosynthesis; L-isoleucine biosynthesis; L-isoleucine from 2-oxobutanoate: step 2/4. It functions in the pathway amino-acid biosynthesis; L-valine biosynthesis; L-valine from pyruvate: step 2/4. Its function is as follows. Involved in the biosynthesis of branched-chain amino acids (BCAA). Catalyzes an alkyl-migration followed by a ketol-acid reduction of (S)-2-acetolactate (S2AL) to yield (R)-2,3-dihydroxy-isovalerate. In the isomerase reaction, S2AL is rearranged via a Mg-dependent methyl migration to produce 3-hydroxy-3-methyl-2-ketobutyrate (HMKB). In the reductase reaction, this 2-ketoacid undergoes a metal-dependent reduction by NADPH to yield (R)-2,3-dihydroxy-isovalerate. This Yersinia pseudotuberculosis serotype O:3 (strain YPIII) protein is Ketol-acid reductoisomerase (NADP(+)).